The sequence spans 160 residues: MD-2-related lipid-recognition protein ROSY1 (160 aa).

A signal peptide spans 1-23 (MAISHTQLLLLLLVSLFFSPALC).

In terms of assembly, interacts with SYT1. In terms of tissue distribution, expressed exclusively in roots, in epidermis and cortex cells of the root elongation zone, and lateral root cap cells at the root tip.

The protein localises to the cytoplasm. Functionally, involved in the regulation of gravitropic response and basipetal auxin transport in roots. Involved in salt stress tolerance. May facilitate membrane trafficking and asymmetric cell elongation via SYT1. Binds stigmasterol and dipalmitoyl phosphoethanolamine (DPPE) in vitro. This Arabidopsis thaliana (Mouse-ear cress) protein is MD-2-related lipid-recognition protein ROSY1.